Here is a 329-residue protein sequence, read N- to C-terminus: MSELKVDTGRLSHIANSGPMSILAYCASSILMTVTNKCVVGSDKFNMLFVMLFAQSLVCVTALVLLKALGYVQYRPLNKVDVKNWLLISVLLVLMTYTSSRALKYLAVPIYTIFKNLTIILIAYGEVLFFGGRVTAMELSSFLLIVLSSVVATLGDQQALAKKPLAAAVESILGLNVGYFWMFTNCICSALFVLIMRKRIALTKFKDFDTMFYNNILSLPLLMLASFMFEDWGAANIARNLTKDYIIIMIISGLASVGISYCSGWCVRVTSSTTYSMVGALNKLPIALSGLLFFDAPKNFLSIFSIFLGFLSGIVYAVAKQKKQSQPAN.

Residues 1 to 13 (MSELKVDTGRLSH) are Cytoplasmic-facing. A helical membrane pass occupies residues 14-34 (IANSGPMSILAYCASSILMTV). At 35 to 44 (TNKCVVGSDK) the chain is on the lumenal side. Residues 45-65 (FNMLFVMLFAQSLVCVTALVL) traverse the membrane as a helical segment. The Cytoplasmic portion of the chain corresponds to 66–79 (LKALGYVQYRPLNK). The chain crosses the membrane as a helical span at residues 80–100 (VDVKNWLLISVLLVLMTYTSS). Residues 101-109 (RALKYLAVP) lie on the Lumenal side of the membrane. The chain crosses the membrane as a helical span at residues 110-130 (IYTIFKNLTIILIAYGEVLFF). The Cytoplasmic segment spans residues 131–133 (GGR). Residues 134 to 154 (VTAMELSSFLLIVLSSVVATL) form a helical membrane-spanning segment. The Lumenal portion of the chain corresponds to 155 to 174 (GDQQALAKKPLAAAVESILG). Residues 175–195 (LNVGYFWMFTNCICSALFVLI) traverse the membrane as a helical segment. Topologically, residues 196–214 (MRKRIALTKFKDFDTMFYN) are cytoplasmic. The helical transmembrane segment at 215–235 (NILSLPLLMLASFMFEDWGAA) threads the bilayer. Residues 236–245 (NIARNLTKDY) lie on the Lumenal side of the membrane. Residue asparagine 240 is glycosylated (N-linked (GlcNAc...) asparagine). A helical membrane pass occupies residues 246–266 (IIIMIISGLASVGISYCSGWC). At 267-273 (VRVTSST) the chain is on the cytoplasmic side. A helical transmembrane segment spans residues 274–294 (TYSMVGALNKLPIALSGLLFF). Topologically, residues 295–298 (DAPK) are lumenal. A helical transmembrane segment spans residues 299–319 (NFLSIFSIFLGFLSGIVYAVA). Over 320-329 (KQKKQSQPAN) the chain is Cytoplasmic.

The protein belongs to the TPT transporter family. SLC35D subfamily. Homooligomer.

It is found in the golgi apparatus membrane. The protein localises to the cytoplasmic vesicle membrane. Its subcellular location is the endoplasmic reticulum membrane. Functionally, involved in the import of GDP-mannose from the cytoplasm into the Golgi lumen. This is GDP-mannose transporter (VRG4) from Eremothecium gossypii (strain ATCC 10895 / CBS 109.51 / FGSC 9923 / NRRL Y-1056) (Yeast).